Reading from the N-terminus, the 190-residue chain is dTTP/UTP pyrophosphatase (190 aa).

D70 functions as the Proton acceptor in the catalytic mechanism.

Belongs to the Maf family. YhdE subfamily. A divalent metal cation serves as cofactor.

The protein resides in the cytoplasm. The enzyme catalyses dTTP + H2O = dTMP + diphosphate + H(+). It carries out the reaction UTP + H2O = UMP + diphosphate + H(+). In terms of biological role, nucleoside triphosphate pyrophosphatase that hydrolyzes dTTP and UTP. May have a dual role in cell division arrest and in preventing the incorporation of modified nucleotides into cellular nucleic acids. The sequence is that of dTTP/UTP pyrophosphatase from Gloeobacter violaceus (strain ATCC 29082 / PCC 7421).